The sequence spans 130 residues: Mating-type-like protein A1 (130 aa).

The segment at residues 68-127 (TYTTRKPLPAKAKLQLVETFSKKRYLTRCEKHQLAVQCGITTNQVQIWFANRRKRSKDLN) is a DNA-binding region (homeobox).

This sequence belongs to the MATA1 family.

It is found in the nucleus. Its function is as follows. Mating type proteins are sequence specific DNA-binding proteins that act as master switches in yeast differentiation by controlling gene expression in a cell type-specific fashion. This is Mating-type-like protein A1 (MTL1A1) from Candida glabrata (strain ATCC 2001 / BCRC 20586 / JCM 3761 / NBRC 0622 / NRRL Y-65 / CBS 138) (Yeast).